The chain runs to 1197 residues: DExH-box ATP-dependent RNA helicase DExH3 (1197 aa).

The region spanning 309 to 476 (LKAIAANQVV…FGGAPAMHIP (168 aa)) is the Helicase ATP-binding domain. Residue 322-329 (GETGCGKT) participates in ATP binding. Positions 423 to 426 (DEIH) match the DEIH box motif. Residues 564-738 (LIENVLCHIV…SLCLQIKSLG (175 aa)) form the Helicase C-terminal domain.

It belongs to the DExH box helicase family.

The catalysed reaction is ATP + H2O = ADP + phosphate + H(+). The sequence is that of DExH-box ATP-dependent RNA helicase DExH3 from Arabidopsis thaliana (Mouse-ear cress).